The chain runs to 458 residues: Exodeoxyribonuclease 7 large subunit (458 aa).

Belongs to the XseA family. As to quaternary structure, heterooligomer composed of large and small subunits.

The protein localises to the cytoplasm. The enzyme catalyses Exonucleolytic cleavage in either 5'- to 3'- or 3'- to 5'-direction to yield nucleoside 5'-phosphates.. Bidirectionally degrades single-stranded DNA into large acid-insoluble oligonucleotides, which are then degraded further into small acid-soluble oligonucleotides. The polypeptide is Exodeoxyribonuclease 7 large subunit (Yersinia enterocolitica serotype O:8 / biotype 1B (strain NCTC 13174 / 8081)).